The sequence spans 2281 residues: Retinal-specific phospholipid-transporting ATPase ABCA4 (2281 aa).

The Cytoplasmic portion of the chain corresponds to 1-24; the sequence is MGFARQIKLLLWKNWTLRKRQKIR. A helical transmembrane segment spans residues 25–45; it reads FVVELVWPLSLFLVLIWLRNV. The Extracellular segment spans residues 46-646; sequence NPLYSKHECH…MPYPCFVDDS (601 aa). 2 disulfides stabilise this stretch: cysteine 54–cysteine 81 and cysteine 75–cysteine 324. Asparagine 98 is a glycosylation site (N-linked (GlcNAc...) asparagine). 2 residues coordinate Mg(2+): serine 336 and asparagine 338. A disulfide bond links cysteine 370 and cysteine 519. Asparagine 415 and asparagine 504 each carry an N-linked (Hex...) asparagine glycan. Positions 587 and 653 each coordinate an N-all-trans-retinylidenephosphatidylethanolamine. Cystine bridges form between cysteine 641/cysteine 1488, cysteine 1442/cysteine 1453, and cysteine 1486/cysteine 1500. Residues 647–667 form a helical membrane-spanning segment; it reads FMIILNRCFPIFMVLAWIYSV. The Cytoplasmic portion of the chain corresponds to 668–699; that stretch reads SMTVKSIVLEKELRLKETLKNQGVSNRVIWCT. Residues 700-720 form a helical membrane-spanning segment; that stretch reads WFLDSFSIMSMSICLLTIFIM. At 721-730 the chain is on the extracellular side; the sequence is HGRILHYSNP. The helical transmembrane segment at 731–751 threads the bilayer; it reads FILFLFLLAFSIATIMQCFLL. Residues 752-759 lie on the Cytoplasmic side of the membrane; that stretch reads STFFSRAS. A helical membrane pass occupies residues 760–780; sequence LAAACSGVIYFTLYLPHILCF. Topologically, residues 781-835 are extracellular; it reads AWQDRITADMKMAVSLLSPVAFGFGTEYLARFEEQGVGLQWSNIGNSPMEGDEFS. Residues 836 to 856 traverse the membrane as a helical segment; it reads FLMSMKMMLLDAALYGLLAWY. Topologically, residues 857 to 1374 are cytoplasmic; the sequence is LDQVFPGDYG…IRSHKDFLAQ (518 aa). The residue at position 901 (threonine 901) is a Phosphothreonine. The 232-residue stretch at 929 to 1160 folds into the ABC transporter 1 domain; that stretch reads VCVKNLVKIF…FGTGFYLTLV (232 aa). The ATP site is built by phenylalanine 938, glycine 966, and lysine 969. Threonine 970 provides a ligand contact to Mg(2+). 6 residues coordinate ATP: threonine 971, glutamine 1010, lysine 1054, glycine 1064, glycine 1065, and histidine 1118. Serine 1185 carries the post-translational modification Phosphoserine. The tract at residues 1295–1340 is disordered; that stretch reads ENINLRHPCSGPSEKAGQTPQGSSSHPREPAAHPEGQPPPEREGHS. The span at 1310–1319 shows a compositional bias: polar residues; it reads AGQTPQGSSS. At threonine 1313 the chain carries Phosphothreonine. Phosphoserine occurs at positions 1317 and 1319. Residues 1375–1395 form a helical membrane-spanning segment; that stretch reads IVLPATFVFLALMLSLIIPPF. Topologically, residues 1396 to 1679 are extracellular; that stretch reads GEYPALTLHP…TVLTTSVDAV (284 aa). The N-linked (Hex...) asparagine glycan is linked to asparagine 1455. N-linked (Hex...) asparagine glycosylation occurs at asparagine 1527. Asparagine 1586 is a glycosylation site (N-linked (GlcNAc...) asparagine). N-linked (Hex...) asparagine glycosylation occurs at asparagine 1660. The helical transmembrane segment at 1680–1700 threads the bilayer; that stretch reads VAICVIFAMSFVPASFVLYLI. The Cytoplasmic portion of the chain corresponds to 1701–1725; the sequence is QERVNKAKHLQFVSGVSPTTYWLTN. The helical transmembrane segment at 1726 to 1746 threads the bilayer; sequence FLWDIMNYTVSAALVVGIFIG. The Extracellular segment spans residues 1747-1757; it reads FQKKAYTSSEN. A helical transmembrane segment spans residues 1758-1778; it reads LPALVALLMLYGWAVIPMMYP. The Cytoplasmic segment spans residues 1779–1790; it reads ASFLFDIPSTAY. The chain crosses the membrane as a helical span at residues 1791 to 1811; sequence VALSCANLFIGINSSAITFVL. Over 1812–1829 the chain is Extracellular; sequence ELFENNRTLLRINAMLRK. An N-linked (GlcNAc...) asparagine glycan is attached at asparagine 1817. The helical transmembrane segment at 1830 to 1850 threads the bilayer; the sequence is LLIIFPHFCLGRGLIDLALSQ. Residues 1851–1879 lie on the Cytoplasmic side of the membrane; that stretch reads AVTDVYARFGEEHSSNPFQWDLIGKNLAA. Residues 1880-1900 traverse the membrane as a helical segment; sequence MAVEGVVYFLLTLLIQYQFFF. Topologically, residues 1901-2281 are extracellular; it reads SRWTTEPAKE…VDKGNSAPQG (381 aa). Asparagine 1931 is a glycosylation site (N-linked (GlcNAc...) asparagine). The 233-residue stretch at 1936-2168 folds into the ABC transporter 2 domain; sequence LRLNELTKVY…FGDGYIVTMK (233 aa). ATP-binding residues include asparagine 1972, glycine 1973, lysine 1976, threonine 1977, and threonine 1978. A Mg(2+)-binding site is contributed by threonine 1977. N-linked (GlcNAc...) asparagine glycans are attached at residues asparagine 2004 and asparagine 2050. An ATP-binding site is contributed by glycine 2071. The interval 2242 to 2247 is essential for ATP binding and ATPase activity; that stretch reads VFVNFA. N-linked (GlcNAc...) asparagine glycosylation is present at asparagine 2251. Residues 2262–2281 form a disordered region; the sequence is AAGASRQAKEVDKGNSAPQG.

Post-translationally, N-glycosylated. In terms of processing, proteolytic cleavage by trypsin leads to a 120-kDa N-terminal fragment and a 115-kDa C-terminal fragment that are linked through disulfide bonds. Phosphorylation is independent of light exposure and modulates ATPase activity. Expressed in retina namely in the periphery and incisures of the rod outer segments (ROS).

The protein localises to the membrane. The protein resides in the cell projection. It localises to the cilium. Its subcellular location is the photoreceptor outer segment. It is found in the cytoplasmic vesicle. The protein localises to the endoplasmic reticulum. The enzyme catalyses ATP + H2O + phospholipidSide 1 = ADP + phosphate + phospholipidSide 2.. It carries out the reaction an N-all-trans-retinylidenephosphatidylethanolamine(out) + ATP + H2O = an N-all-trans-retinylidenephosphatidylethanolamine(in) + ADP + phosphate + H(+). It catalyses the reaction a 1,2-diacyl-sn-glycero-3-phosphoethanolamine(out) + ATP + H2O = a 1,2-diacyl-sn-glycero-3-phosphoethanolamine(in) + ADP + phosphate + H(+). The catalysed reaction is N-11-cis-retinylidenephosphatidylethanolamine(out) + ATP + H2O = N-11-cis-retinylidenephosphatidylethanolamine(in) + ADP + phosphate + H(+). The enzyme catalyses ATP + H2O = ADP + phosphate + H(+). Its activity is regulated as follows. All-trans-retinal transport activity is reduced by EDTA chelation of Mg2+. All-trans-retinal transport activity is inhibited by N-ethylmaleimide (NEM). Phosphatidylethanolamine transport is strongly inhibited by beryllium fluoride and NEM. In terms of biological role, flippase that catalyzes in an ATP-dependent manner the transport of retinal-phosphatidylethanolamine conjugates like the 11-cis and all-trans isomers of N-retinylidene-phosphatidylethanolamine from the lumen to the cytoplasmic leaflet of photoreceptor outer segment disk membranes, where N-cis-retinylidene-phosphatidylethanolamine (N-cis-R-PE) is then isomerized to its all-trans isomer (N-trans-R-PE) and reduced by RDH8 to produce all-trans-retinol (all-trans-rol) and therefore prevents the accumulation of excess of 11-cis-retinal and its schiff-base conjugate and the formation of toxic bisretinoid. Displays both ATPase and GTPase activity that is strongly influenced by the lipid environment and the presence of retinoid compounds. Binds the unprotonated form of N-retinylidene-phosphatidylethanolamine with high affinity in the absence of ATP and ATP binding and hydrolysis induce a protein conformational change that causes the dissociation of N-retinylidene-phosphatidylethanolamine. The sequence is that of Retinal-specific phospholipid-transporting ATPase ABCA4 from Bos taurus (Bovine).